A 148-amino-acid chain; its full sequence is Ubiquitin-conjugating enzyme E2 28 (148 aa).

Positions 1 to 147 constitute a UBC core domain; that stretch reads MASKRILKEL…ARSWTQKYAM (147 aa). C85 (glycyl thioester intermediate) is an active-site residue.

It belongs to the ubiquitin-conjugating enzyme family. Interacts with SINAT5. In terms of tissue distribution, expressed in seeds, pistils, siliques, hypocotyls and leaves.

The catalysed reaction is S-ubiquitinyl-[E1 ubiquitin-activating enzyme]-L-cysteine + [E2 ubiquitin-conjugating enzyme]-L-cysteine = [E1 ubiquitin-activating enzyme]-L-cysteine + S-ubiquitinyl-[E2 ubiquitin-conjugating enzyme]-L-cysteine.. Its pathway is protein modification; protein ubiquitination. Its function is as follows. Accepts the ubiquitin from the E1 complex and catalyzes its covalent attachment to other proteins. This Arabidopsis thaliana (Mouse-ear cress) protein is Ubiquitin-conjugating enzyme E2 28.